The following is a 158-amino-acid chain: MPLKTIEGTFIAPQGKYALVVGRFNSFVVESLVSGAVDALVRHGVSENDITIIRAPGAFEIPLVAQKVAQQGEYDAIIALGAVIRGGTPHFEYVAGECTKGLAQVSMEFGVPVAFGVLTVDSIEQAIERSGTKAGNKGAEAALSALEMVSLLSQLEAK.

5-amino-6-(D-ribitylamino)uracil is bound by residues phenylalanine 24, alanine 58 to glutamate 60, and alanine 82 to isoleucine 84. Glycine 87–threonine 88 contributes to the (2S)-2-hydroxy-3-oxobutyl phosphate binding site. Residue histidine 90 is the Proton donor of the active site. Residue phenylalanine 115 coordinates 5-amino-6-(D-ribitylamino)uracil. Arginine 129 serves as a coordination point for (2S)-2-hydroxy-3-oxobutyl phosphate.

Belongs to the DMRL synthase family. Forms an icosahedral capsid composed of 60 subunits, arranged as a dodecamer of pentamers.

It carries out the reaction (2S)-2-hydroxy-3-oxobutyl phosphate + 5-amino-6-(D-ribitylamino)uracil = 6,7-dimethyl-8-(1-D-ribityl)lumazine + phosphate + 2 H2O + H(+). It participates in cofactor biosynthesis; riboflavin biosynthesis; riboflavin from 2-hydroxy-3-oxobutyl phosphate and 5-amino-6-(D-ribitylamino)uracil: step 1/2. Functionally, catalyzes the formation of 6,7-dimethyl-8-ribityllumazine by condensation of 5-amino-6-(D-ribitylamino)uracil with 3,4-dihydroxy-2-butanone 4-phosphate. This is the penultimate step in the biosynthesis of riboflavin. The chain is 6,7-dimethyl-8-ribityllumazine synthase from Stutzerimonas stutzeri (strain A1501) (Pseudomonas stutzeri).